A 222-amino-acid polypeptide reads, in one-letter code: Large ribosomal subunit protein mL64 (222 aa).

Disordered regions lie at residues 19 to 46 (APGS…EDLL) and 188 to 222 (KRLK…APSS). Residues 25 to 36 (YRARPPPRRRPG) show a composition bias toward basic residues. The stretch at 99-212 (MQESLRVKQL…AAALAAAVAQ (114 aa)) forms a coiled coil. The short motif at 184–200 (KKERKRLKEEKQKRKKE) is the Nuclear localization signal element. The segment covering 203-212 (AAALAAAVAQ) has biased composition (low complexity).

This sequence belongs to the mitochondrion-specific ribosomal protein mL64 family. Component of the mitochondrial large ribosomal subunit (mt-LSU). Mature mammalian 55S mitochondrial ribosomes consist of a small (28S) and a large (39S) subunit. The 28S small subunit contains a 12S ribosomal RNA (12S mt-rRNA) and 30 different proteins. The 39S large subunit contains a 16S rRNA (16S mt-rRNA), a copy of mitochondrial valine transfer RNA (mt-tRNA(Val)), which plays an integral structural role, and 52 different proteins. Interacts with GADD45A, GADD45B and GADD45G. Interacts with NR4A1 via the NR4A1 AB domain. Interacts with ATAD3A and ATAD3B. In terms of assembly, (Microbial infection) Interacts with the human papilloma virus type 16 (HPV 16) minor capsid protein L2. As to expression, widely expressed. Highly expressed in the thyroid gland, heart, lymph nodes, trachea and adrenal tissues. Expressed at lower level in liver skeletal muscle, kidney, pancreas, testis, ovary and stomach. Barely detectable in adrenal adenoma and papillary thyroid cancer.

Its subcellular location is the mitochondrion. The protein resides in the nucleus. In terms of biological role, acts as a negative regulator of G1 to S cell cycle phase progression by inhibiting cyclin-dependent kinases. Inhibitory effects are additive with GADD45 proteins but also occur in the absence of GADD45 proteins. Acts as a repressor of the orphan nuclear receptor NR4A1 by inhibiting AB domain-mediated transcriptional activity. May be involved in the hormone-mediated regulation of NR4A1 transcriptional activity. May play a role in mitochondrial protein synthesis. The polypeptide is Large ribosomal subunit protein mL64 (GADD45GIP1) (Homo sapiens (Human)).